The sequence spans 773 residues: Cellobiose dehydrogenase (773 aa).

A signal peptide spans 1-18; it reads MLGRSLLALLPFVGLAFS. Q19 bears the Pyrrolidone carboxylic acid mark. The tract at residues 19–208 is heme domain; the sequence is QSASQFTDPT…YQNYLNGDSG (190 aa). Positions 83 and 181 each coordinate heme. The disordered stretch occupies residues 203 to 227; it reads LNGDSGNPTTTSTKPTSTSSSVTTG. Residues 210–227 show a composition bias toward low complexity; the sequence is PTTTSTKPTSTSSSVTTG. An oxidoreductase region spans residues 235 to 773; it reads YDYIIVGAGP…AKILALAGGP (539 aa). FAD is bound at residue 236-265; sequence DYIIVGAGPGGIIAADRLSEAGKKVLLLER. The Proton acceptor role is filled by H707.

This sequence in the C-terminal section; belongs to the GMC oxidoreductase family. FAD is required as a cofactor. Requires heme as cofactor.

The protein localises to the secreted. It carries out the reaction D-cellobiose + A = D-cellobiono-1,5-lactone + AH2. In terms of biological role, degrades both lignin and cellulose. Oxidizes cellobiose to cellobionolactone. This Phanerodontia chrysosporium (White-rot fungus) protein is Cellobiose dehydrogenase (CDH-1).